The following is a 119-amino-acid chain: Large ribosomal subunit protein uL18 (119 aa).

This sequence belongs to the universal ribosomal protein uL18 family. As to quaternary structure, part of the 50S ribosomal subunit; part of the 5S rRNA/L5/L18/L25 subcomplex. Contacts the 5S and 23S rRNAs.

Functionally, this is one of the proteins that bind and probably mediate the attachment of the 5S RNA into the large ribosomal subunit, where it forms part of the central protuberance. The chain is Large ribosomal subunit protein uL18 from Chlorobium luteolum (strain DSM 273 / BCRC 81028 / 2530) (Pelodictyon luteolum).